We begin with the raw amino-acid sequence, 141 residues long: Short-chain diamines transporter (141 aa).

Transmembrane regions (helical) follow at residues 16–36, 39–59, 76–96, and 103–123; these read VILLVIIAIALSFIFDVPLEV, TLGIVMAVTSVFWNMIFNHFF, ILHAIGFEGGLMLVTIPMVAY, and WQAIVLDFGLTMCILVYTFIF.

The protein belongs to the proteobacterial antimicrobial compound efflux (PACE) (TC 2.A.117) family.

It localises to the cell inner membrane. Mediates the efflux of short-chain diamines when energized by an electrochemical gradient. Involved in resistance to the synthetic biocide chlorhexidine, a widely used antiseptic and disinfectant in both hospital and community settings. Interacts directly with chlorhexidine and mediates its efflux via an energy-dependent mechanism. In Acinetobacter baylyi (strain ATCC 33305 / BD413 / ADP1), this protein is Short-chain diamines transporter.